The following is a 224-amino-acid chain: Small ribosomal subunit protein uS3c (224 aa).

The region spanning 43-124 (IKNYIQKNRK…RLNIAIEKVK (82 aa)) is the KH type-2 domain.

Belongs to the universal ribosomal protein uS3 family. Part of the 30S ribosomal subunit.

The protein localises to the plastid. It localises to the chloroplast. In Saccharum hybrid (Sugarcane), this protein is Small ribosomal subunit protein uS3c (rps3).